The chain runs to 59 residues: UPF0434 protein Shewmr7_2490 (59 aa).

This sequence belongs to the UPF0434 family.

The protein is UPF0434 protein Shewmr7_2490 of Shewanella sp. (strain MR-7).